The following is a 164-amino-acid chain: R-phycoerythrin alpha chain (164 aa).

(2R,3E)-phycoerythrobilin-binding residues include asparagine 47, lysine 81, cysteine 82, arginine 84, histidine 88, arginine 137, cysteine 139, and arginine 142.

Belongs to the phycobiliprotein family. In terms of assembly, heterododecamer of 6 alpha and 6 beta chains. The basic functional unit of phycobiliproteins is a ring-shaped hexamer formed from two back-to-back trimers contacting via the alpha chain subunits. The trimers are composed of alpha/beta subunit heterodimers arranged around a three-fold axis of symmetry. The phycoerythrins also contain a gamma subunit which is located in the center of the hexamer. In terms of processing, contains two covalently linked phycoerythrobilin chromophores.

It localises to the plastid. The protein localises to the chloroplast thylakoid membrane. In terms of biological role, light-harvesting photosynthetic tetrapyrrole chromophore-protein from the phycobiliprotein complex. The protein is R-phycoerythrin alpha chain (cpeA) of Griffithsia monilis (Red alga).